A 429-amino-acid polypeptide reads, in one-letter code: Ubiquinone hydroxylase UbiL (429 aa).

Residues 1 to 22 (MSEPLLRGLAAGDPPSATGPVT) are disordered.

It belongs to the UbiH/COQ6 family. It depends on FAD as a cofactor.

It carries out the reaction a 2-(all-trans-polyprenyl)phenol + NADPH + O2 + H(+) = a 3-(all-trans-polyprenyl)benzene-1,2-diol + NADP(+) + H2O. It participates in cofactor biosynthesis; ubiquinone biosynthesis. Functionally, catalyzes the hydroxylation of two positions of the aromatic ring during ubiquinone biosynthesis. The chain is Ubiquinone hydroxylase UbiL from Rhodospirillum rubrum (strain ATCC 11170 / ATH 1.1.1 / DSM 467 / LMG 4362 / NCIMB 8255 / S1).